We begin with the raw amino-acid sequence, 168 residues long: Peptide methionine sulfoxide reductase 2 (168 aa).

Residues Asp-40 to Asp-168 enclose the MsrB domain. Zn(2+) contacts are provided by Cys-79, Cys-82, Cys-128, and Cys-131. An intrachain disulfide couples Cys-97 to Cys-157. The Nucleophile role is filled by Cys-157.

It belongs to the MsrB Met sulfoxide reductase family. Zn(2+) serves as cofactor.

It carries out the reaction L-methionyl-[protein] + [thioredoxin]-disulfide + H2O = L-methionyl-(R)-S-oxide-[protein] + [thioredoxin]-dithiol. Methionine-R-sulfoxide reductase which catalyzes the reduction of methionine sulfoxide (MetSO) to methionine in proteins. Plays a protective role against oxidative stress by restoring activity to proteins that have been inactivated by methionine oxidation. Protects iron-sulfur clusters from oxidative inactivation along with MXR1. Involved in the regulation of lifespan. This is Peptide methionine sulfoxide reductase 2 (MXR2) from Saccharomyces cerevisiae (strain ATCC 204508 / S288c) (Baker's yeast).